We begin with the raw amino-acid sequence, 247 residues long: Fumarate reductase iron-sulfur subunit (247 aa).

Tyrosine 12 provides a ligand contact to a menaquinone. A 2Fe-2S ferredoxin-type domain is found at 14–94; the sequence is PEIESAPTFQ…PGPVRVEPMR (81 aa). Positions 56, 61, and 76 each coordinate [2Fe-2S] cluster. In terms of domain architecture, 4Fe-4S ferredoxin-type spans 140–169; that stretch reads LDAFKQFSMCINCMLCYSACPVYALDPDFL. Cysteine 149, cysteine 152, and cysteine 155 together coordinate [4Fe-4S] cluster. [3Fe-4S] cluster-binding residues include cysteine 159, cysteine 205, and cysteine 211. Position 215 (cysteine 215) interacts with [4Fe-4S] cluster. A menaquinone is bound at residue 226-229; that stretch reads QRYK.

This sequence belongs to the succinate dehydrogenase/fumarate reductase iron-sulfur protein family. In terms of assembly, fumarate dehydrogenase forms part of an enzyme complex containing four subunits: a flavoprotein, an iron-sulfur, and two hydrophobic anchor proteins. The cofactor is [2Fe-2S] cluster. It depends on [3Fe-4S] cluster as a cofactor. Requires [4Fe-4S] cluster as cofactor.

It is found in the cell membrane. It catalyses the reaction a quinone + succinate = fumarate + a quinol. It carries out the reaction a menaquinone + succinate = a menaquinol + fumarate. This chain is Fumarate reductase iron-sulfur subunit (frdB), found in Mycobacterium tuberculosis (strain CDC 1551 / Oshkosh).